We begin with the raw amino-acid sequence, 264 residues long: MNVSVNIKNVTKEYRIYRTNKERMKDALIPKHKNKTFFALDDISLKAYEGDVIGLVGINGSGKSTLSNIIGGSLSPTVGKVDRNGEVSVIAISAGLSGQLTGIENIEFKMLCMGFKRKEIKAMTPKIIEFSELGEFIYQPVKKYSSGMRAKLGFSINITVNPDILVIDEALSVGDQTFAQKCLDKIYEFKEQNKTIFFVSHNLGQVRQFCTKIAWIEGGKLKDYGELDDVLPKYEAFLNDFKKKSKAEQKEFRNKLDESRFVIK.

Positions 5 to 243 (VNIKNVTKEY…YEAFLNDFKK (239 aa)) constitute an ABC transporter domain. 57–64 (GINGSGKS) serves as a coordination point for ATP.

It belongs to the ABC transporter superfamily. Teichoic acids exporter (TC 3.A.1.104.1) family. The complex is composed of two ATP-binding proteins (TagH) and two transmembrane proteins (TagG).

Its subcellular location is the cell membrane. It catalyses the reaction ATP + H2O + teichoic acidSide 1 = ADP + phosphate + teichoic acidSide 2.. Functionally, part of the ABC transporter complex TagGH involved in teichoic acids export. Responsible for energy coupling to the transport system. The chain is Teichoic acids export ATP-binding protein TagH from Staphylococcus aureus (strain USA300).